The primary structure comprises 337 residues: Serpentine receptor class alpha-17 (337 aa).

Transmembrane regions (helical) follow at residues 28 to 48, 110 to 130, 155 to 175, 197 to 217, 247 to 267, and 282 to 302; these read LNFV…GLAI, ELYF…SLTF, IIQL…VPLV, FRTA…YLSV, CILI…VNYI, and IAPF…VIYF.

The protein belongs to the nematode receptor-like protein sra family.

Its subcellular location is the membrane. This chain is Serpentine receptor class alpha-17 (sra-17), found in Caenorhabditis elegans.